The primary structure comprises 196 residues: Ribosome maturation factor RimM (196 aa).

The PRC barrel domain occupies 118–196; it reads QGEYYWRDLI…EMTVDWDPDF (79 aa).

It belongs to the RimM family. In terms of assembly, binds ribosomal protein uS19.

It localises to the cytoplasm. Functionally, an accessory protein needed during the final step in the assembly of 30S ribosomal subunit, possibly for assembly of the head region. Essential for efficient processing of 16S rRNA. May be needed both before and after RbfA during the maturation of 16S rRNA. It has affinity for free ribosomal 30S subunits but not for 70S ribosomes. The sequence is that of Ribosome maturation factor RimM from Alcanivorax borkumensis (strain ATCC 700651 / DSM 11573 / NCIMB 13689 / SK2).